Here is a 429-residue protein sequence, read N- to C-terminus: Adenylosuccinate synthetase (429 aa).

Residues 12–18 (GDEGKGK) and 40–42 (GHT) contribute to the GTP site. D13 serves as the catalytic Proton acceptor. Mg(2+)-binding residues include D13 and G40. IMP is bound by residues 13-16 (DEGK), 38-41 (NAGH), T129, R143, Q223, T238, and R302. The active-site Proton donor is the H41. Position 298 to 304 (298 to 304 (TVTGRQR)) interacts with substrate. GTP-binding positions include R304, 330-332 (KID), and 412-414 (STS).

The protein belongs to the adenylosuccinate synthetase family. In terms of assembly, homodimer. It depends on Mg(2+) as a cofactor.

Its subcellular location is the cytoplasm. It catalyses the reaction IMP + L-aspartate + GTP = N(6)-(1,2-dicarboxyethyl)-AMP + GDP + phosphate + 2 H(+). Its pathway is purine metabolism; AMP biosynthesis via de novo pathway; AMP from IMP: step 1/2. Plays an important role in the de novo pathway of purine nucleotide biosynthesis. Catalyzes the first committed step in the biosynthesis of AMP from IMP. The sequence is that of Adenylosuccinate synthetase from Erythrobacter litoralis (strain HTCC2594).